The chain runs to 198 residues: V-type ATP synthase subunit E 1 (198 aa).

The protein belongs to the V-ATPase E subunit family.

Its function is as follows. Produces ATP from ADP in the presence of a proton gradient across the membrane. In Clostridium tetani (strain Massachusetts / E88), this protein is V-type ATP synthase subunit E 1.